Consider the following 239-residue polypeptide: tRNA1(Val) (adenine(37)-N6)-methyltransferase (239 aa).

It belongs to the methyltransferase superfamily. tRNA (adenine-N(6)-)-methyltransferase family.

It localises to the cytoplasm. The enzyme catalyses adenosine(37) in tRNA1(Val) + S-adenosyl-L-methionine = N(6)-methyladenosine(37) in tRNA1(Val) + S-adenosyl-L-homocysteine + H(+). Functionally, specifically methylates the adenine in position 37 of tRNA(1)(Val) (anticodon cmo5UAC). This Vibrio campbellii (strain ATCC BAA-1116) protein is tRNA1(Val) (adenine(37)-N6)-methyltransferase.